The sequence spans 526 residues: Protein spinster homolog 1 (526 aa).

The tract at residues 1 to 43 is disordered; the sequence is MTSRSSQGDAAPFLTQADNTEEEGAPDPGGHSSDEEEEEGKDH. Helical transmembrane passes span 48–68, 98–118, 126–146, 159–179, 187–207, 218–238, 272–292, 321–341, 355–375, 385–405, 419–439, and 463–483; these read HLLTGISYRHSVTIVIILFYI, GLVQTVFICSYMFLAPVFGYL, LIMCIGISFWSLVTLLSSFVS, LVGVGEASYSTIAPTIIADLF, MLSFFYFATPVGCGLGYIAGS, WALRVTPGLGLVAVLLLIFVA, FILSTFGFTTVAFVTGALALW, MIFGGITCVTGVLGVLTGVEI, LVCAVGMISSAPFLYLSLAFA, FIFIGETLLSLNWALVADILL, LQIVVSHLLGDAGSPYLIGVI, and MICAFVGVIGGGFFLATALFI.

The protein belongs to the major facilitator superfamily. Spinster (TC 2.A.1.49) family.

It localises to the lysosome membrane. It carries out the reaction a 1-acyl-sn-glycero-3-phosphocholine(out) + H(+)(out) = a 1-acyl-sn-glycero-3-phosphocholine(in) + H(+)(in). The catalysed reaction is a 1-acyl-sn-glycero-3-phosphoethanolamine(out) + H(+)(out) = a 1-acyl-sn-glycero-3-phosphoethanolamine(in) + H(+)(in). The enzyme catalyses a 1-O-(1Z-alkenyl)-sn-glycero-3-phosphocholine(out) + H(+)(out) = a 1-O-(1Z-alkenyl)-sn-glycero-3-phosphocholine(in) + H(+)(in). It catalyses the reaction a 1-O-(1Z-alkenyl)-sn-glycero-3-phosphoethanolamine(out) + H(+)(out) = a 1-O-(1Z-alkenyl)-sn-glycero-3-phosphoethanolamine(in) + H(+)(in). Mediates the rate-limiting, proton-dependent, lysosomal efflux of lysophospholipids. Selective for zwitterionic headgroups such as lysophosphatidylcholine (LPC) and lysophosphatidylethanolamine (LPE). Essential player in lysosomal homeostasis. The sequence is that of Protein spinster homolog 1 (spns1) from Xenopus tropicalis (Western clawed frog).